A 291-amino-acid polypeptide reads, in one-letter code: Phosphatidylglycerol--prolipoprotein diacylglyceryl transferase (291 aa).

The next 7 helical transmembrane spans lie at 21 to 41, 60 to 80, 96 to 116, 130 to 150, 198 to 218, 225 to 245, and 260 to 280; these read VSLH…MWLA, LLYA…VLFY, WDGG…MIIF, FIAP…FING, SQLY…NLFI, GSVS…VEFF, and ISMG…MMVW. Residue arginine 143 participates in a 1,2-diacyl-sn-glycero-3-phospho-(1'-sn-glycerol) binding.

This sequence belongs to the Lgt family.

It localises to the cell inner membrane. It carries out the reaction L-cysteinyl-[prolipoprotein] + a 1,2-diacyl-sn-glycero-3-phospho-(1'-sn-glycerol) = an S-1,2-diacyl-sn-glyceryl-L-cysteinyl-[prolipoprotein] + sn-glycerol 1-phosphate + H(+). Its pathway is protein modification; lipoprotein biosynthesis (diacylglyceryl transfer). Catalyzes the transfer of the diacylglyceryl group from phosphatidylglycerol to the sulfhydryl group of the N-terminal cysteine of a prolipoprotein, the first step in the formation of mature lipoproteins. This Klebsiella pneumoniae (strain 342) protein is Phosphatidylglycerol--prolipoprotein diacylglyceryl transferase.